Here is a 260-residue protein sequence, read N- to C-terminus: Carbonic anhydrase (260 aa).

Positions 1-31 (MAHAWGYGPADGPESWAESFPIANGPRQSPI) are disordered. The 257-residue stretch at 3–259 (HAWGYGPADG…LKGRKVRASF (257 aa)) folds into the Alpha-carbonic anhydrase domain. His64 serves as the catalytic Proton acceptor. Residues His94, His96, and His119 each coordinate Zn(2+). Residue Tyr127 is part of the active site. 198 to 199 (TT) lines the substrate pocket.

Belongs to the alpha-carbonic anhydrase family. Zn(2+) serves as cofactor.

The catalysed reaction is hydrogencarbonate + H(+) = CO2 + H2O. Reversible hydration of carbon dioxide. In Danio rerio (Zebrafish), this protein is Carbonic anhydrase (cahz).